Reading from the N-terminus, the 51-residue chain is Large ribosomal subunit protein bL33 (51 aa).

Residues 1-24 (MREKIRLNSSAGTGHFYTTDKNKR) are disordered.

Belongs to the bacterial ribosomal protein bL33 family.

The chain is Large ribosomal subunit protein bL33 from Cellvibrio japonicus (strain Ueda107) (Pseudomonas fluorescens subsp. cellulosa).